The primary structure comprises 248 residues: Proteasome subunit alpha (248 aa).

The protein belongs to the peptidase T1A family. In terms of assembly, the 20S proteasome core is composed of 14 alpha and 14 beta subunits that assemble into four stacked heptameric rings, resulting in a barrel-shaped structure. The two inner rings, each composed of seven catalytic beta subunits, are sandwiched by two outer rings, each composed of seven alpha subunits. The catalytic chamber with the active sites is on the inside of the barrel. Has a gated structure, the ends of the cylinder being occluded by the N-termini of the alpha-subunits. Is capped at one or both ends by the proteasome regulatory ATPase, PAN.

It localises to the cytoplasm. Its activity is regulated as follows. The formation of the proteasomal ATPase PAN-20S proteasome complex, via the docking of the C-termini of PAN into the intersubunit pockets in the alpha-rings, triggers opening of the gate for substrate entry. Interconversion between the open-gate and close-gate conformations leads to a dynamic regulation of the 20S proteasome proteolysis activity. Functionally, component of the proteasome core, a large protease complex with broad specificity involved in protein degradation. In Methanothermobacter thermautotrophicus (strain ATCC 29096 / DSM 1053 / JCM 10044 / NBRC 100330 / Delta H) (Methanobacterium thermoautotrophicum), this protein is Proteasome subunit alpha.